We begin with the raw amino-acid sequence, 132 residues long: Small ribosomal subunit protein uS8 (132 aa).

The protein belongs to the universal ribosomal protein uS8 family. As to quaternary structure, part of the 30S ribosomal subunit. Contacts proteins S5 and S12.

Its function is as follows. One of the primary rRNA binding proteins, it binds directly to 16S rRNA central domain where it helps coordinate assembly of the platform of the 30S subunit. The sequence is that of Small ribosomal subunit protein uS8 from Bartonella tribocorum (strain CIP 105476 / IBS 506).